The chain runs to 234 residues: Sugar fermentation stimulation protein A (234 aa).

The segment at residues 201–220 (LLSEAQQRGVEILAYKAEIS) is a DNA-binding region (H-T-H motif).

The protein belongs to the SfsA family.

Its function is as follows. Binds to DNA non-specifically. Could be a regulatory factor involved in maltose metabolism. The protein is Sugar fermentation stimulation protein A of Shigella flexneri serotype 5b (strain 8401).